The sequence spans 496 residues: Glutamyl-tRNA(Gln) amidotransferase subunit A, mitochondrial (496 aa).

Active-site charge relay system residues include Lys-80 and Ser-161. Ser-185 (acyl-ester intermediate) is an active-site residue.

The protein belongs to the amidase family. GatA subfamily. Subunit of the heterotrimeric GatCAB amidotransferase (AdT) complex, composed of A, B and C subunits.

It localises to the mitochondrion. It catalyses the reaction L-glutamyl-tRNA(Gln) + L-glutamine + ATP + H2O = L-glutaminyl-tRNA(Gln) + L-glutamate + ADP + phosphate + H(+). In terms of biological role, allows the formation of correctly charged Gln-tRNA(Gln) through the transamidation of misacylated Glu-tRNA(Gln) in the mitochondria. The reaction takes place in the presence of glutamine and ATP through an activated gamma-phospho-Glu-tRNA(Gln). The chain is Glutamyl-tRNA(Gln) amidotransferase subunit A, mitochondrial from Culex quinquefasciatus (Southern house mosquito).